The following is a 673-amino-acid chain: Protein transport Sec1a (673 aa).

The interval 538 to 591 is disordered; it reads SSHKEESEARTGSVRKSSAPTAVPERKATPHSMRSRRTATWARPHSSDDGYSSD.

The protein belongs to the STXBP/unc-18/SEC1 family. In terms of assembly, does not bind the syntaxin KNOLLE.

Its function is as follows. Involved in the vesicle trafficking. Binds syntaxins. This is Protein transport Sec1a (SEC1A) from Arabidopsis thaliana (Mouse-ear cress).